Reading from the N-terminus, the 293-residue chain is Pyridoxal 5'-phosphate synthase subunit PdxS (293 aa).

Asp-23 is a D-ribose 5-phosphate binding site. Lys-80 acts as the Schiff-base intermediate with D-ribose 5-phosphate in catalysis. D-ribose 5-phosphate is bound at residue Gly-152. Arg-164 provides a ligand contact to D-glyceraldehyde 3-phosphate. Residues Gly-213 and 234–235 (GS) each bind D-ribose 5-phosphate.

Belongs to the PdxS/SNZ family. As to quaternary structure, in the presence of PdxT, forms a dodecamer of heterodimers.

The enzyme catalyses aldehydo-D-ribose 5-phosphate + D-glyceraldehyde 3-phosphate + L-glutamine = pyridoxal 5'-phosphate + L-glutamate + phosphate + 3 H2O + H(+). It functions in the pathway cofactor biosynthesis; pyridoxal 5'-phosphate biosynthesis. In terms of biological role, catalyzes the formation of pyridoxal 5'-phosphate from ribose 5-phosphate (RBP), glyceraldehyde 3-phosphate (G3P) and ammonia. The ammonia is provided by the PdxT subunit. Can also use ribulose 5-phosphate and dihydroxyacetone phosphate as substrates, resulting from enzyme-catalyzed isomerization of RBP and G3P, respectively. This chain is Pyridoxal 5'-phosphate synthase subunit PdxS, found in Thermus thermophilus (strain ATCC BAA-163 / DSM 7039 / HB27).